A 321-amino-acid polypeptide reads, in one-letter code: Protein FAM110C (321 aa).

2 disordered regions span residues 1–84 and 111–203; these read MRAL…APAP and RGSG…SQSD. Composition is skewed to basic and acidic residues over residues 15 to 46 and 131 to 145; these read LLPR…DRAK and GKDK…DEGK. A compositionally biased stretch (low complexity) spans 169 to 181; sequence APAARSAAPSSVP. Position 241 is a phosphoserine (Ser-241).

The protein belongs to the FAM110 family. As to quaternary structure, interacts with AKT1; the interaction is transient and follows AKT1 activation. Interacts with PPP2CA and alpha-tubulin. In terms of tissue distribution, detected in stomach, thyroid, trachea, adrenal gland and testis, and at low levels in prostate, ovary, intestine, colon, spinal cord and lymph node.

The protein localises to the cytoplasm. It localises to the cytoskeleton. The protein resides in the microtubule organizing center. Its subcellular location is the centrosome. It is found in the spindle pole. The protein localises to the nucleus. Functionally, may play a role in microtubule organization. May play a role in cell spreading and cell migration of epithelial cells; the function may involve the AKT1 signaling pathway. The chain is Protein FAM110C (FAM110C) from Homo sapiens (Human).